The following is a 374-amino-acid chain: Translocating chain-associated membrane protein 1 (374 aa).

Topologically, residues 1–29 (MAIRKKSNKNPPLLSHEFLLQNHADIVSC) are cytoplasmic. A helical transmembrane segment spans residues 30–50 (LAMLFLLGLMFEVTAKGAIIF). The Lumenal segment spans residues 51 to 76 (VALQYNVTRPATEEQATESASLYHYG). N56 carries N-linked (GlcNAc...) asparagine glycosylation. A helical transmembrane segment spans residues 77-97 (IKDLATVLFYMLVAIIIHAII). Over 98-121 (QEYVLDKINRRMHFSKTKHSKFNE) the chain is Cytoplasmic. Residues 117–326 (SKFNESGQLS…NFQLRRWREH (210 aa)) enclose the TLC domain. Residues 122 to 142 (SGQLSAFYLFACVWGTFILIS) form a helical membrane-spanning segment. The Lumenal portion of the chain corresponds to 143 to 159 (ENYISDPTILWRAYPHN). A helical membrane pass occupies residues 160–180 (LMTFQTKFFYISQLAYWLHAF). The Cytoplasmic portion of the chain corresponds to 181-192 (PELYFQKTKKED). A helical membrane pass occupies residues 193-213 (IPRQLVYIGLYLFHIAGAYLL). The Lumenal portion of the chain corresponds to 214-217 (NLNH). The chain crosses the membrane as a helical span at residues 218-238 (LGLVLLVLHYFVEFLFHISRL). Residues 239 to 251 (FYFSDEKYQKGFS) lie on the Cytoplasmic side of the membrane. A helical transmembrane segment spans residues 252 to 272 (LWAVLFVLGRLLTLILSVLTV). Residues 273–297 (GFGLARAENQKLDFSTGNFNVLAVR) lie on the Lumenal side of the membrane. Residues 298-318 (IAVLASICITQAFMMWKFINF) form a helical membrane-spanning segment. Topologically, residues 319-374 (QLRRWREHSAFQAPPVKRKPAVTKGRSSRKGTENGVNGTVTSNGADSPRNRKEKSS) are cytoplasmic. The tract at residues 333-374 (PVKRKPAVTKGRSSRKGTENGVNGTVTSNGADSPRNRKEKSS) is disordered. The segment covering 334–347 (VKRKPAVTKGRSSR) has biased composition (basic residues). Residues 352 to 363 (NGVNGTVTSNGA) are compositionally biased toward polar residues. Position 365 is a phosphoserine (S365).

It belongs to the TRAM family. As to quaternary structure, interacts with SEC61B. May interact with Derlin-1/DERL1. Post-translationally, N-glycosylated.

It localises to the endoplasmic reticulum membrane. Functionally, involved in the translocation of nascent protein chains into or through the endoplasmic reticulum (ER) membrane by facilitating the proper chain positioning at the SEC61 channel. Regulates the exposure of nascent secretory protein chain to the cytosol during translocation into the ER. May affect the phospholipid bilayer in the vicinity of the lateral gate of the SEC61 channel, thereby facilitating ER protein transport. Intimately associates with transmembrane (TM) domain of nascent membrane proteins during the entire integration process into the ER membrane. Associates with the second TM domain of G-protein-coupled receptor opsin/OPSD nascent chain in the ER membrane, which may facilitate its integration into the membrane. Under conditions of ER stress, participates in the disposal of misfolded ER membrane proteins during the unfolded protein response (UPR), an integrated stress response (ISR) pathway, by selectively retrotranslocating misfolded ER-membrane proteins from the ER into the cytosol where they are ubiquitinated and degraded by the proteasome. This Mus musculus (Mouse) protein is Translocating chain-associated membrane protein 1.